The following is a 572-amino-acid chain: Proline--tRNA ligase (572 aa).

Belongs to the class-II aminoacyl-tRNA synthetase family. ProS type 1 subfamily. In terms of assembly, homodimer.

Its subcellular location is the cytoplasm. The catalysed reaction is tRNA(Pro) + L-proline + ATP = L-prolyl-tRNA(Pro) + AMP + diphosphate. Its function is as follows. Catalyzes the attachment of proline to tRNA(Pro) in a two-step reaction: proline is first activated by ATP to form Pro-AMP and then transferred to the acceptor end of tRNA(Pro). As ProRS can inadvertently accommodate and process non-cognate amino acids such as alanine and cysteine, to avoid such errors it has two additional distinct editing activities against alanine. One activity is designated as 'pretransfer' editing and involves the tRNA(Pro)-independent hydrolysis of activated Ala-AMP. The other activity is designated 'posttransfer' editing and involves deacylation of mischarged Ala-tRNA(Pro). The misacylated Cys-tRNA(Pro) is not edited by ProRS. The protein is Proline--tRNA ligase of Buchnera aphidicola subsp. Acyrthosiphon pisum (strain 5A).